Reading from the N-terminus, the 508-residue chain is Light-independent protochlorophyllide reductase subunit B (508 aa).

Asp-36 contacts [4Fe-4S] cluster. Catalysis depends on Asp-294, which acts as the Proton donor. Residue 429–430 (GM) participates in substrate binding.

The protein belongs to the ChlB/BchB/BchZ family. Protochlorophyllide reductase is composed of three subunits; ChlL, ChlN and ChlB. Forms a heterotetramer of two ChlB and two ChlN subunits. The cofactor is [4Fe-4S] cluster.

It catalyses the reaction chlorophyllide a + oxidized 2[4Fe-4S]-[ferredoxin] + 2 ADP + 2 phosphate = protochlorophyllide a + reduced 2[4Fe-4S]-[ferredoxin] + 2 ATP + 2 H2O. The protein operates within porphyrin-containing compound metabolism; chlorophyll biosynthesis (light-independent). In terms of biological role, component of the dark-operative protochlorophyllide reductase (DPOR) that uses Mg-ATP and reduced ferredoxin to reduce ring D of protochlorophyllide (Pchlide) to form chlorophyllide a (Chlide). This reaction is light-independent. The NB-protein (ChlN-ChlB) is the catalytic component of the complex. This chain is Light-independent protochlorophyllide reductase subunit B, found in Synechococcus elongatus (strain ATCC 33912 / PCC 7942 / FACHB-805) (Anacystis nidulans R2).